Consider the following 500-residue polypeptide: MGTARWLALGSLFALAGLLEGRLVGEEEAGFGECDKFFYAGTPPAGLAADSHVKICQRAEGAERFATLYSTRDRIPVYSAFRAPRPAPGGAEQRWLVEPQIDDPNSNLEEAINEAEAITSVNSLGSKQALNTDYLDSDYQRGQLYPFSLSSDVQVATFTLTNSAPMTQSFQERWYVNLHSLMDRALTPQCGSGEDLYILTGTVPSDYRVKDKVAVPEFVWLAACCAVPGGGWAMGFVKHTRDSDIIEDVMVKDLQKLLPFNPQLFQNNCGETEQDTEKMKKILEVVNQIQDEERMVQSQKSSSPLSSTRSKRSTLLPPEASEGSSSFLGKLMGFIATPFIKLFQLIYYLVVAILKNIVYFLWCVTKQVINGIESCLYRLGSATISYFMAIGEELVSIPWKVLKVVAKVIRALLRILCCLLKAICRVLSIPVRVLVDVATFPVYTMGAIPIVCKDIALGLGGTVSLLFDTAFGTLGGLFQVVFSVCKRIGYKVTFDNSGEL.

The first 21 residues, 1–21, serve as a signal peptide directing secretion; it reads MGTARWLALGSLFALAGLLEG. Residues 293–323 form a disordered region; the sequence is ERMVQSQKSSSPLSSTRSKRSTLLPPEASEG. Residues 297 to 317 are compositionally biased toward low complexity; that stretch reads QSQKSSSPLSSTRSKRSTLLP. The residue at position 407 (Lys407) is an N6-acetyllysine.

Belongs to the DNA/RNA non-specific endonuclease family. As to quaternary structure, interacts with RNF26; this interaction is important to modulate innate immune signaling through the cGAS-STING pathway.

Its subcellular location is the secreted. In terms of biological role, may act as a DNase and a RNase. Plays a role in the modulation of innate immune signaling through the cGAS-STING pathway by interacting with RNF26. This is Endonuclease domain-containing 1 protein (ENDOD1) from Homo sapiens (Human).